A 274-amino-acid polypeptide reads, in one-letter code: Pantothenate synthetase (274 aa).

27-34 is a binding site for ATP; that stretch reads MGALHQGH. The active-site Proton donor is His34. A (R)-pantoate-binding site is contributed by Gln58. Gln58 serves as a coordination point for beta-alanine. 144–147 is a binding site for ATP; sequence GKKD. A (R)-pantoate-binding site is contributed by Gln150. Residues Ile173 and 181–184 contribute to the ATP site; that span reads LSSR.

This sequence belongs to the pantothenate synthetase family. In terms of assembly, homodimer.

It is found in the cytoplasm. It catalyses the reaction (R)-pantoate + beta-alanine + ATP = (R)-pantothenate + AMP + diphosphate + H(+). Its pathway is cofactor biosynthesis; (R)-pantothenate biosynthesis; (R)-pantothenate from (R)-pantoate and beta-alanine: step 1/1. In terms of biological role, catalyzes the condensation of pantoate with beta-alanine in an ATP-dependent reaction via a pantoyl-adenylate intermediate. This is Pantothenate synthetase from Sulfurovum sp. (strain NBC37-1).